A 424-amino-acid polypeptide reads, in one-letter code: 2,3-bisphosphoglycerate-independent phosphoglycerate mutase (424 aa).

It belongs to the BPG-independent phosphoglycerate mutase family. A-PGAM subfamily.

The enzyme catalyses (2R)-2-phosphoglycerate = (2R)-3-phosphoglycerate. It functions in the pathway carbohydrate degradation; glycolysis; pyruvate from D-glyceraldehyde 3-phosphate: step 3/5. In terms of biological role, catalyzes the interconversion of 2-phosphoglycerate and 3-phosphoglycerate. The polypeptide is 2,3-bisphosphoglycerate-independent phosphoglycerate mutase (Aeropyrum pernix (strain ATCC 700893 / DSM 11879 / JCM 9820 / NBRC 100138 / K1)).